The sequence spans 196 residues: Ankyrin repeat domain-containing protein 66 (196 aa).

ANK repeat units lie at residues 7–37 (SDMT…DPNY), 43–72 (NDRT…RPCL), and 76–105 (VGWT…AIDA). The disordered stretch occupies residues 152–196 (ERDEDWDAKKRELELSLPSLNQNMNKKNKKSRGPTRPSNTKGRRV). The span at 187–196 (RPSNTKGRRV) shows a compositional bias: polar residues.

This chain is Ankyrin repeat domain-containing protein 66 (ANKRD66), found in Homo sapiens (Human).